The primary structure comprises 520 residues: Hydroxymethylglutaryl-CoA synthase, cytoplasmic (520 aa).

Ser-4 bears the Phosphoserine mark. A (3S)-3-hydroxy-3-methylglutaryl-CoA-binding site is contributed by Ala-44. 44-46 (AGK) serves as a coordination point for CoA. Lys-46 is modified (N6-acetyllysine). Glu-95 functions as the Proton donor/acceptor in the catalytic mechanism. (3S)-3-hydroxy-3-methylglutaryl-CoA-binding residues include Cys-129, Asn-167, Thr-171, Ser-221, and His-264. The active-site Acyl-thioester intermediate is the Cys-129. CoA is bound at residue Asn-167. Residue Ser-221 participates in CoA binding. His-264 acts as the Proton donor/acceptor in catalysis. CoA is bound by residues Lys-269 and Lys-273. Residues Lys-273, Asn-343, and Ser-377 each coordinate (3S)-3-hydroxy-3-methylglutaryl-CoA. Lys-273 is modified (N6-acetyllysine). A Phosphothreonine modification is found at Thr-476. Positions 492–520 (HIPSPAKKVPRLPATAAEPEAAVISNGEH) are disordered. Phosphoserine occurs at positions 495 and 516.

The protein belongs to the thiolase-like superfamily. HMG-CoA synthase family. As to quaternary structure, homodimer.

It localises to the cytoplasm. The enzyme catalyses acetoacetyl-CoA + acetyl-CoA + H2O = (3S)-3-hydroxy-3-methylglutaryl-CoA + CoA + H(+). It functions in the pathway metabolic intermediate biosynthesis; (R)-mevalonate biosynthesis; (R)-mevalonate from acetyl-CoA: step 2/3. Catalyzes the condensation of acetyl-CoA with acetoacetyl-CoA to form HMG-CoA, which is converted by HMG-CoA reductase (HMGCR) into mevalonate, a precursor for cholesterol synthesis. This chain is Hydroxymethylglutaryl-CoA synthase, cytoplasmic, found in Pongo abelii (Sumatran orangutan).